We begin with the raw amino-acid sequence, 213 residues long: NADH dehydrogenase [ubiquinone] iron-sulfur protein 7, mitochondrial (213 aa).

A mitochondrion-targeting transit peptide spans 1 to 38; the sequence is MAVLSAPGLRGFRILGLRSSVGPAVQARGVHQSVATDG. Residues 31–53 are disordered; it reads HQSVATDGPSSTQPALPKARAVA. Over residues 33-44 the composition is skewed to polar residues; it reads SVATDGPSSTQP. [4Fe-4S] cluster contacts are provided by Cys88 and Cys89. Arg111 bears the Hydroxyarginine mark. Residues Cys153 and Cys183 each contribute to the [4Fe-4S] cluster site.

Belongs to the complex I 20 kDa subunit family. Core subunit of respiratory chain NADH dehydrogenase (Complex I) which is composed of 45 different subunits. This is a component of the iron-sulfur (IP) fragment of the enzyme. The cofactor is [4Fe-4S] cluster. Post-translationally, hydroxylated at Arg-111 by NDUFAF5 early in the pathway of assembly of complex I, before the formation of the juncture between peripheral and membrane arms.

The protein localises to the mitochondrion inner membrane. The enzyme catalyses a ubiquinone + NADH + 5 H(+)(in) = a ubiquinol + NAD(+) + 4 H(+)(out). Its function is as follows. Core subunit of the mitochondrial membrane respiratory chain NADH dehydrogenase (Complex I) which catalyzes electron transfer from NADH through the respiratory chain, using ubiquinone as an electron acceptor. Essential for the catalytic activity of complex I. This chain is NADH dehydrogenase [ubiquinone] iron-sulfur protein 7, mitochondrial (NDUFS7), found in Homo sapiens (Human).